The primary structure comprises 134 residues: Large ribosomal subunit protein bL17 (134 aa).

Belongs to the bacterial ribosomal protein bL17 family. In terms of assembly, part of the 50S ribosomal subunit. Contacts protein L32.

This is Large ribosomal subunit protein bL17 from Paracidovorax citrulli (strain AAC00-1) (Acidovorax citrulli).